A 741-amino-acid chain; its full sequence is HSP-interacting protein (741 aa).

TPR repeat units follow at residues 26 to 59, 65 to 100, and 102 to 134; these read SREL…LPAG, AHLR…VPRY, and RALL…EPGN. Residues 168 to 270 form a disordered region; it reads ASAKGEERKK…GESKQQKHSA (103 aa). Over residues 171-184 the composition is skewed to basic and acidic residues; the sequence is KGEERKKSRNKRFD. Over residues 201-218 the composition is skewed to polar residues; sequence SASTEKQAGPRQTNGTGN. Positions 219–247 are enriched in basic and acidic residues; that stretch reads HQDHTEDSESNGLEKLEQSTETGEKDMGK. The span at 248-258 shows a compositional bias: basic residues; the sequence is KRGAHAAGKKP. Residues 285 to 364 form the PB1 domain; it reads MKDVKLVFGE…VPIRFYVVEV (80 aa). TPR repeat units follow at residues 496-530, 532-557, 558-591, and 628-663; these read EFIL…KSDF, EGLI…ACKI, NMET…RLKG, and SHIN…AMEK.

As to quaternary structure, interacts (via C-terminus) with O1. Interacts (via C-terminus) with OP10 (via N-terminus).

Acts as a co-chaperone for HSP90 and is required for proper folding of the myosin motor domain. In Zea mays (Maize), this protein is HSP-interacting protein.